Reading from the N-terminus, the 270-residue chain is Glutamate 5-kinase (270 aa).

An ATP-binding site is contributed by lysine 17. Substrate contacts are provided by serine 57, aspartate 144, and asparagine 160. Residues serine 180 to aspartate 181 and threonine 222 to lysine 228 each bind ATP.

The protein belongs to the glutamate 5-kinase family.

It is found in the cytoplasm. The catalysed reaction is L-glutamate + ATP = L-glutamyl 5-phosphate + ADP. It functions in the pathway amino-acid biosynthesis; L-proline biosynthesis; L-glutamate 5-semialdehyde from L-glutamate: step 1/2. Its function is as follows. Catalyzes the transfer of a phosphate group to glutamate to form L-glutamate 5-phosphate. The chain is Glutamate 5-kinase from Lactococcus lactis subsp. cremoris (strain SK11).